The sequence spans 362 residues: METINLEKPLYSLKKFYFPSEWSYPINKNYKHIKDTYNEGVSCGIFEASNEKHFAYANGVLNCVTWFYPKYDYEQCMVAASIMLWIFVLDDFLERDHMTDEKQQYCVKKYEDILIFGKDSSYISNIEYNDLTPLDKYSLILRKRLLNPTIHRIESFNIFIHYLREWFFSIIPLKKSKGNNHDSVPIEVYQFIRTINIGLFFVVGVNSVAVRTNVHGSFWLNPIWNRMVRSASRQIIIFNDCVSYAKELNHDCAGENCLYILQKKLNLPFEKVYSELIAEAKQCIFDIQNDEKLLIKSLSHISEEEMNGVIYLVEQLHEIICGNRDWALMTPRYIHKDSPFIETNGIDSLFVPYETILDPNLY.

The DDxx(x)D/E motif signature appears at 90 to 95; it reads DDFLER. The NDxxSxxxD/E motif signature appears at 239 to 247; it reads NDCVSYAKE.

The protein belongs to the terpene synthase family.

The enzyme catalyses (2E,6E)-farnesyl diphosphate = beta-maaliene + diphosphate. The catalysed reaction is (2E,6E)-farnesyl diphosphate = aristolene + diphosphate. It carries out the reaction (2E,6E)-farnesyl diphosphate = calarene + diphosphate. It catalyses the reaction (2E)-geranyl diphosphate = (E)-beta-ocimene + diphosphate. The enzyme catalyses (2E)-geranyl diphosphate = (Z)-beta-ocimene + diphosphate. The catalysed reaction is (2E)-geranyl diphosphate + H2O = linalool + diphosphate. It carries out the reaction (2E)-geranyl diphosphate = beta-myrcene + diphosphate. Its function is as follows. Terpene synthase that converts its substrate farnesyl diphosphate (FPP) into an unidentified sesquiterpene as a major product, as well as beta-maaliene, aristolene, calarene and 2 additional unidentified sesquiterpene as minor products. Is also able to convert geranyl diphosphate (GPP) into a mixture of monoterpenes including (Z)-beta-ocimene, (E)-beta-ocimene, allo-ocimene, linalool and beta-myrcene. The sequence is that of Terpene synthase 3 from Dictyostelium discoideum (Social amoeba).